The following is a 503-amino-acid chain: Maturase K (503 aa).

The protein belongs to the intron maturase 2 family. MatK subfamily.

The protein localises to the plastid. It localises to the chloroplast. Its function is as follows. Usually encoded in the trnK tRNA gene intron. Probably assists in splicing its own and other chloroplast group II introns. The sequence is that of Maturase K from Callistemon polandii (Gold-tipped bottlebrush).